We begin with the raw amino-acid sequence, 219 residues long: Thymidylate kinase (219 aa).

9–16 (GIEGCGKT) serves as a coordination point for ATP.

The protein belongs to the thymidylate kinase family.

It carries out the reaction dTMP + ATP = dTDP + ADP. Its function is as follows. Phosphorylation of dTMP to form dTDP in both de novo and salvage pathways of dTTP synthesis. This is Thymidylate kinase from Syntrophus aciditrophicus (strain SB).